The following is a 421-amino-acid chain: MPPGSWWLVLWLPPLATLPAGAVPQEEAAMSVPRCKSLKETDLIKTSVSDCYCYNQHSQIEWTYMWSTVQVTVTSPGLLSIVYITGRHTCQHTETILSFLKCVTHNFWTAEEAKEVTIVFSPYGETVCFSVKPVGSLLTYAVSVNRNVVDFRLFLVFATGIFLFFYAKTLSQSPVFYYSSGTVLGILMTLVFVLLMTKKHIPKYSTFGALMIGCWFASVYVLCQLMENLKWLWCGNRIYVLGYVLVVGLCSFSACYSRGPPADEGSRDLLMWALRFLSLVLVYTGMAISQFAYAVMILLLLSWTRHYLLRAFSCLRWKVRQWFATRALVVRYLTDDEYREQAEAETASALEELRQACCRPDFPSWLAVSRLQAPKKFAEFVLGASHLSPEEVSTHEKQYGLGGAFLEEQLFSLQTESLPAS.

An N-terminal signal peptide occupies residues 1 to 22 (MPPGSWWLVLWLPPLATLPAGA). A run of 5 helical transmembrane segments spans residues 147-167 (NVVD…FFYA), 175-195 (VFYY…FVLL), 206-226 (TFGA…CQLM), 232-252 (LWCG…LCSF), and 279-299 (LVLV…MILL).

It belongs to the NEMP family.

It is found in the nucleus inner membrane. The sequence is that of Nuclear envelope integral membrane protein 2 (Nemp2) from Rattus norvegicus (Rat).